Reading from the N-terminus, the 710-residue chain is FAST kinase domain-containing protein 2, mitochondrial (710 aa).

A phosphoserine mark is found at Ser-126 and Ser-140. The RAP domain occupies 634 to 691 (VAVLCVSRSAYCLGSSHPRGFLAMKMRHLNAMGFHVILVNNWEMDKLEMEDAVTFLKT). Residue Ser-708 is modified to Phosphoserine.

This sequence belongs to the FAST kinase family. As to quaternary structure, monomer. Found in a complex with GRSF1, DDX28, DHX30 and FASTKD5. Associates with the 16S mitochondrial rRNA (16S mt-rRNA). Forms a regulatory protein-RNA complex, consisting of RCC1L, NGRN, RPUSD3, RPUSD4, TRUB2, FASTKD2 and 16S mt-rRNA. Expression detected in spleen, thymus, testis, ovary, colon, heart, smooth muscle, kidney, brain, lung, liver and white adipose tissue with highest expression in heart, smooth muscle and thyroid.

It is found in the mitochondrion matrix. It localises to the mitochondrion nucleoid. In terms of biological role, plays an important role in assembly of the mitochondrial large ribosomal subunit. As a component of a functional protein-RNA module, consisting of RCC1L, NGRN, RPUSD3, RPUSD4, TRUB2, FASTKD2 and 16S mitochondrial ribosomal RNA (16S mt-rRNA), controls 16S mt-rRNA abundance and is required for intra-mitochondrial translation. May play a role in mitochondrial apoptosis. The sequence is that of FAST kinase domain-containing protein 2, mitochondrial from Homo sapiens (Human).